We begin with the raw amino-acid sequence, 113 residues long: MNTVRVTFLLVFVLAVSLGQADKDENRMEMQEKTEQGKSYLDFAENLLLQKLEELEAKLLEEDSEESRNSRQKRCIGEGVPCDENDPRCCSGLVCLKPTLHGIWYKSYYCYKK.

An N-terminal signal peptide occupies residues 1–21 (MNTVRVTFLLVFVLAVSLGQA). The propeptide occupies 22–74 (DKDENRMEMQEKTEQGKSYLDFAENLLLQKLEELEAKLLEEDSEESRNSRQKR). The disordered stretch occupies residues 61–83 (EEDSEESRNSRQKRCIGEGVPCD). Disulfide bonds link Cys-75–Cys-90, Cys-82–Cys-95, and Cys-89–Cys-110.

This sequence belongs to the neurotoxin 14 (magi-1) family. 01 (HNTX-16) subfamily. As to expression, expressed by the venom gland.

The protein localises to the secreted. In terms of biological role, probable ion channel inhibitor. This chain is U11-theraphotoxin-Hhn1a, found in Cyriopagopus hainanus (Chinese bird spider).